The primary structure comprises 383 residues: Seipin (383 aa).

Over 1–27 (MVNDPPVPALLWAQEVGHVLAGRARRL) the chain is Cytoplasmic. Residues 28 to 48 (MLQFGVLFCTILLLLWVSVFL) traverse the membrane as a helical segment. The Lumenal segment spans residues 49 to 242 (YGSFYYSYMP…TCAFVGVASN (194 aa)). Asn88 and Asn242 each carry an N-linked (GlcNAc...) asparagine glycan. Residues 243–263 (FTFLSVIVLFSYMQWVWGAVW) traverse the membrane as a helical segment. Residues 264–383 (PRHRFSLQVN…LRQRPTCSSS (120 aa)) are Cytoplasmic-facing. Residues 279–383 (NSHHGAPRRI…LRQRPTCSSS (105 aa)) form a disordered region. Ser289 bears the Phosphoserine mark. Polar residues predominate over residues 292–302 (QPGQESTQQSD). Residues 322–332 (EEEKPEKRPLN) show a composition bias toward basic and acidic residues. A phosphoserine mark is found at Ser342 and Ser345. The segment covering 353 to 371 (TEANPPTSASASALAPETL) has biased composition (low complexity).

This sequence belongs to the seipin family. As to quaternary structure, undecamer (an oligomer having eleven subunits). Oligomerization is important for its function in lipid droplet formation. Interacts with LDAF1 to form an oligomeric complex. Interacts with RAB18. Interacts with ZFYVE1 in a RAB18-dependent manner. As to expression, expressed in the paraventricular nucleus of the hypothalamus (PVN) and brainstem dorsal vagal complex (DVC) in oxytocin and catecholaminergic neurons (at protein level). Highest expression detected in subcutaneous and epididymal white adipose tissue, brown adipose tissue and testis. Also expressed in brain, skeletal muscle and adrenal gland, with lower levels detected in liver, heart, kidney, spleen, lung and small intestine. In brain, detected in piriform cortex, olfactory tubercle, islands of Calleja, lateral septal nucleus, medial septal nucleus, nucleus of the vertical limb of the diagonal band, nucleus of the horizontal limb of the diagonal band, preoptic area, paraventricular thalamic nucleus, lateral globus pallidus, supraoptic nucleus, suprachiasmatic nucleus, subfornical organ, paraventricular nucleus of the hypothalamus, zona incerta, dorsomedial nucleus of the hypothalamus, ventromedial nucleus of the hypothalamus, arcuate nucleus of the hypothalamus, basomedial amygdaloid nucleus, medial amygdaloid nucleus, medial habenular, pyramidal cell layer of the hippocampus, granular layer of the dentate gyrus, posterior hypothalamus, supramammilliary nucleus, premammillary nucleus, nucleus of Darkschewitsch, Edinger-Westphal nucleus, ventral tegmental area, dorsal raphe nucleus, periaqueductal gray, median raphe nucleus, lateral parabrachial nucleus, dorsal tegmental nucleus, laterodorsal tegmental nucleus, locus coeruleus, Barrington's nucleus, medial vestibular nucleus, ambiguous nucleus, dorsal vagal complex and hypoglossal nucleus.

The protein resides in the endoplasmic reticulum membrane. Its subcellular location is the lipid droplet. In terms of biological role, plays a crucial role in the formation of lipid droplets (LDs) which are storage organelles at the center of lipid and energy homeostasis. In association with LDAF1, defines the sites of LD formation in the ER. Also required for growth and maturation of small nascent LDs into larger mature LDs. Mediates the formation and/or stabilization of endoplasmic reticulum-lipid droplets (ER-LD) contacts, facilitating protein and lipid delivery from the ER into growing LDs. Regulates the maturation of ZFYVE1-positive nascent LDs and the function of the RAB18-ZFYVE1 complex in mediating the formation of ER-LD contacts. Binds anionic phospholipids including phosphatidic acid. Plays an important role in the differentiation and development of adipocytes. The polypeptide is Seipin (Mus musculus (Mouse)).